The following is a 184-amino-acid chain: ATP synthase subunit b, chloroplastic (184 aa).

The helical transmembrane segment at 27-49 (LATNPINLSVVLGVLIFFGKGVL) threads the bilayer.

It belongs to the ATPase B chain family. F-type ATPases have 2 components, F(1) - the catalytic core - and F(0) - the membrane proton channel. F(1) has five subunits: alpha(3), beta(3), gamma(1), delta(1), epsilon(1). F(0) has four main subunits: a(1), b(1), b'(1) and c(10-14). The alpha and beta chains form an alternating ring which encloses part of the gamma chain. F(1) is attached to F(0) by a central stalk formed by the gamma and epsilon chains, while a peripheral stalk is formed by the delta, b and b' chains.

The protein resides in the plastid. Its subcellular location is the chloroplast thylakoid membrane. In terms of biological role, f(1)F(0) ATP synthase produces ATP from ADP in the presence of a proton or sodium gradient. F-type ATPases consist of two structural domains, F(1) containing the extramembraneous catalytic core and F(0) containing the membrane proton channel, linked together by a central stalk and a peripheral stalk. During catalysis, ATP synthesis in the catalytic domain of F(1) is coupled via a rotary mechanism of the central stalk subunits to proton translocation. Component of the F(0) channel, it forms part of the peripheral stalk, linking F(1) to F(0). The chain is ATP synthase subunit b, chloroplastic from Citrus sinensis (Sweet orange).